The chain runs to 428 residues: Protein CLP1 homolog (428 aa).

ATP-binding positions include Glu22, Lys63, and 127–132 (DVGKST).

Belongs to the Clp1 family. Clp1 subfamily.

Its subcellular location is the nucleus. Its function is as follows. Required for endonucleolytic cleavage during polyadenylation-dependent pre-mRNA 3'-end formation. In Nematostella vectensis (Starlet sea anemone), this protein is Protein CLP1 homolog.